An 87-amino-acid polypeptide reads, in one-letter code: Putative regulatory protein BCG9842_B1272 (87 aa).

Belongs to the RemA family.

This is Putative regulatory protein BCG9842_B1272 from Bacillus cereus (strain G9842).